The chain runs to 729 residues: Fatty acid oxidation complex subunit alpha (729 aa).

Positions 1 to 189 (MLYKGDTLYL…KIGLVDGVVK (189 aa)) are enoyl-CoA hydratase/isomerase. Aspartate 296 contacts substrate. The segment at 311–729 (ETPKQAAVLG…ARPVGDLKTA (419 aa)) is 3-hydroxyacyl-CoA dehydrogenase. NAD(+) is bound by residues methionine 324, aspartate 343, 400–402 (VVE), lysine 407, and serine 429. Histidine 450 serves as the catalytic For 3-hydroxyacyl-CoA dehydrogenase activity. Residue asparagine 453 coordinates NAD(+). Substrate-binding residues include asparagine 500 and tyrosine 660. Positions 708 to 729 (RHNEPYYPPVEPARPVGDLKTA) are disordered.

It in the N-terminal section; belongs to the enoyl-CoA hydratase/isomerase family. The protein in the C-terminal section; belongs to the 3-hydroxyacyl-CoA dehydrogenase family. Heterotetramer of two alpha chains (FadB) and two beta chains (FadA).

The catalysed reaction is a (3S)-3-hydroxyacyl-CoA + NAD(+) = a 3-oxoacyl-CoA + NADH + H(+). It catalyses the reaction a (3S)-3-hydroxyacyl-CoA = a (2E)-enoyl-CoA + H2O. The enzyme catalyses a 4-saturated-(3S)-3-hydroxyacyl-CoA = a (3E)-enoyl-CoA + H2O. It carries out the reaction (3S)-3-hydroxybutanoyl-CoA = (3R)-3-hydroxybutanoyl-CoA. The catalysed reaction is a (3Z)-enoyl-CoA = a 4-saturated (2E)-enoyl-CoA. It catalyses the reaction a (3E)-enoyl-CoA = a 4-saturated (2E)-enoyl-CoA. Its pathway is lipid metabolism; fatty acid beta-oxidation. In terms of biological role, involved in the aerobic and anaerobic degradation of long-chain fatty acids via beta-oxidation cycle. Catalyzes the formation of 3-oxoacyl-CoA from enoyl-CoA via L-3-hydroxyacyl-CoA. It can also use D-3-hydroxyacyl-CoA and cis-3-enoyl-CoA as substrate. This chain is Fatty acid oxidation complex subunit alpha, found in Escherichia coli O81 (strain ED1a).